A 532-amino-acid polypeptide reads, in one-letter code: CTP synthase (532 aa).

An amidoligase domain region spans residues 1–265; the sequence is MKYIVVTGGV…DEYLMRKLNL (265 aa). Position 12 (S12) interacts with CTP. S12 serves as a coordination point for UTP. ATP-binding positions include 13 to 18 and D70; that span reads GLGKGI. Residues D70 and E140 each coordinate Mg(2+). CTP-binding positions include 147 to 149, 186 to 191, and K222; these read DIE and KTKPTQ. UTP contacts are provided by residues 186–191 and K222; that span reads KTKPTQ. In terms of domain architecture, Glutamine amidotransferase type-1 spans 289–529; it reads SIAIVGKYVD…VRAALKYRRE (241 aa). G349 is a binding site for L-glutamine. Residue C376 is the Nucleophile; for glutamine hydrolysis of the active site. L-glutamine is bound by residues 377 to 380, E400, and R457; that span reads FGFQ. Residues H502 and E504 contribute to the active site.

It belongs to the CTP synthase family. Homotetramer.

It catalyses the reaction UTP + L-glutamine + ATP + H2O = CTP + L-glutamate + ADP + phosphate + 2 H(+). The enzyme catalyses L-glutamine + H2O = L-glutamate + NH4(+). It carries out the reaction UTP + NH4(+) + ATP = CTP + ADP + phosphate + 2 H(+). It participates in pyrimidine metabolism; CTP biosynthesis via de novo pathway; CTP from UDP: step 2/2. With respect to regulation, allosterically activated by GTP, when glutamine is the substrate; GTP has no effect on the reaction when ammonia is the substrate. The allosteric effector GTP functions by stabilizing the protein conformation that binds the tetrahedral intermediate(s) formed during glutamine hydrolysis. Inhibited by the product CTP, via allosteric rather than competitive inhibition. In terms of biological role, catalyzes the ATP-dependent amination of UTP to CTP with either L-glutamine or ammonia as the source of nitrogen. Regulates intracellular CTP levels through interactions with the four ribonucleotide triphosphates. The protein is CTP synthase of Archaeoglobus fulgidus (strain ATCC 49558 / DSM 4304 / JCM 9628 / NBRC 100126 / VC-16).